Reading from the N-terminus, the 278-residue chain is Transmembrane protein 45B (278 aa).

The next 7 helical transmembrane spans lie at 7–27 (HALP…KYPL), 49–69 (IIEG…EQFV), 95–115 (YLFF…FHIV), 117–137 (LGLD…LFYF), 149–169 (IHSL…LEVI), 183–203 (LLIL…PPFG), and 215–235 (IMFI…IVAI). Phosphoserine is present on residues Ser273 and Ser275.

This sequence belongs to the TMEM45 family.

Its subcellular location is the endosome membrane. It localises to the lysosome membrane. The protein localises to the golgi apparatus. The protein resides in the trans-Golgi network membrane. Plays a role in innate immunity. The chain is Transmembrane protein 45B (Tmem45b) from Mus musculus (Mouse).